We begin with the raw amino-acid sequence, 114 residues long: Lymphotactin (114 aa).

The first 21 residues, 1 to 21 (MRLLLLTFLGVCCFAAWVVEG), serve as a signal peptide directing secretion. A disulfide bond links Cys32 and Cys69. The tract at residues 87–114 (RASASKSKAETIPTQAQRSASTAVTLTG) is disordered. Residues 98–114 (IPTQAQRSASTAVTLTG) show a composition bias toward polar residues.

Belongs to the intercrine gamma family.

The protein resides in the secreted. In terms of biological role, chemotactic activity for lymphocytes but not for monocytes or neutrophils. In thymus, mediates medullary accumulation of thymic dendritic cells and contributes to regulatoy T cell development, playing a role in self-tolerance establishment. The chain is Lymphotactin (Xcl1) from Rattus norvegicus (Rat).